The primary structure comprises 198 residues: ATP-dependent Clp protease proteolytic subunit (198 aa).

Catalysis depends on S103, which acts as the Nucleophile. Residue H128 is part of the active site.

The protein belongs to the peptidase S14 family. Fourteen ClpP subunits assemble into 2 heptameric rings which stack back to back to give a disk-like structure with a central cavity, resembling the structure of eukaryotic proteasomes.

The protein resides in the cytoplasm. The enzyme catalyses Hydrolysis of proteins to small peptides in the presence of ATP and magnesium. alpha-casein is the usual test substrate. In the absence of ATP, only oligopeptides shorter than five residues are hydrolyzed (such as succinyl-Leu-Tyr-|-NHMec, and Leu-Tyr-Leu-|-Tyr-Trp, in which cleavage of the -Tyr-|-Leu- and -Tyr-|-Trp bonds also occurs).. Functionally, cleaves peptides in various proteins in a process that requires ATP hydrolysis. Has a chymotrypsin-like activity. Plays a major role in the degradation of misfolded proteins. The chain is ATP-dependent Clp protease proteolytic subunit from Vesicomyosocius okutanii subsp. Calyptogena okutanii (strain HA).